Reading from the N-terminus, the 407-residue chain is S-adenosylmethionine synthase (407 aa).

Histidine 21 contributes to the ATP binding site. Aspartate 23 serves as a coordination point for Mg(2+). Residue glutamate 49 participates in K(+) binding. 2 residues coordinate L-methionine: glutamate 62 and glutamine 105. The interval 105 to 115 (QSQEIGAGVDA) is flexible loop. Residues 179-181 (DGK), aspartate 259, 265-266 (RK), alanine 282, and lysine 286 contribute to the ATP site. Aspartate 259 provides a ligand contact to L-methionine. Lysine 290 serves as a coordination point for L-methionine.

The protein belongs to the AdoMet synthase family. As to quaternary structure, homotetramer; dimer of dimers. Mg(2+) serves as cofactor. It depends on K(+) as a cofactor.

It localises to the cytoplasm. It carries out the reaction L-methionine + ATP + H2O = S-adenosyl-L-methionine + phosphate + diphosphate. The protein operates within amino-acid biosynthesis; S-adenosyl-L-methionine biosynthesis; S-adenosyl-L-methionine from L-methionine: step 1/1. Its function is as follows. Catalyzes the formation of S-adenosylmethionine (AdoMet) from methionine and ATP. The overall synthetic reaction is composed of two sequential steps, AdoMet formation and the subsequent tripolyphosphate hydrolysis which occurs prior to release of AdoMet from the enzyme. This Corynebacterium aurimucosum (strain ATCC 700975 / DSM 44827 / CIP 107346 / CN-1) (Corynebacterium nigricans) protein is S-adenosylmethionine synthase.